The sequence spans 212 residues: Large ribosomal subunit protein uL4 (212 aa).

Residues 43-52 (NNRQGTASTK) are compositionally biased toward polar residues. Residues 43–77 (NNRQGTASTKTRSEVRGGGRKPWRQKGTGRARAGS) form a disordered region. Positions 60–71 (GGRKPWRQKGTG) are enriched in basic residues.

It belongs to the universal ribosomal protein uL4 family. As to quaternary structure, part of the 50S ribosomal subunit.

Functionally, one of the primary rRNA binding proteins, this protein initially binds near the 5'-end of the 23S rRNA. It is important during the early stages of 50S assembly. It makes multiple contacts with different domains of the 23S rRNA in the assembled 50S subunit and ribosome. In terms of biological role, forms part of the polypeptide exit tunnel. This is Large ribosomal subunit protein uL4 from Trichodesmium erythraeum (strain IMS101).